Here is a 136-residue protein sequence, read N- to C-terminus: Small ribosomal subunit protein uS9 (136 aa).

The disordered stretch occupies residues 111-136 (TRDPRMKERKKTGQPGARKRFQFSKR). Basic residues predominate over residues 117-136 (KERKKTGQPGARKRFQFSKR).

It belongs to the universal ribosomal protein uS9 family.

This is Small ribosomal subunit protein uS9 from Methylacidiphilum infernorum (isolate V4) (Methylokorus infernorum (strain V4)).